The chain runs to 423 residues: D-tagatose-1,6-bisphosphate aldolase subunit GatZ (423 aa).

This sequence belongs to the GatZ/KbaZ family. GatZ subfamily. As to quaternary structure, forms a complex with GatY.

It participates in carbohydrate metabolism; D-tagatose 6-phosphate degradation; D-glyceraldehyde 3-phosphate and glycerone phosphate from D-tagatose 6-phosphate: step 2/2. Component of the tagatose-1,6-bisphosphate aldolase GatYZ that is required for full activity and stability of the Y subunit. Could have a chaperone-like function for the proper and stable folding of GatY. When expressed alone, GatZ does not show any aldolase activity. Is involved in the catabolism of galactitol. The chain is D-tagatose-1,6-bisphosphate aldolase subunit GatZ from Salmonella enteritidis PT4 (strain P125109).